The chain runs to 371 residues: Glycosyltransferase 8 domain-containing protein 1 (371 aa).

The Cytoplasmic segment spans residues 1–7 (MSFRKVN). A helical; Signal-anchor for type II membrane protein transmembrane segment spans residues 8–28 (IIIWVLAVVLFLLVLHHNFLS). Over 29–371 (LSSLLKNDIS…RRHMDTSNIK (343 aa)) the chain is Lumenal. Residue Asn257 is glycosylated (N-linked (GlcNAc...) asparagine).

It belongs to the glycosyltransferase 8 family.

The protein resides in the membrane. The sequence is that of Glycosyltransferase 8 domain-containing protein 1 (Glt8d1) from Mus musculus (Mouse).